The primary structure comprises 87 residues: Small ribosomal subunit protein bS20 (87 aa).

The tract at residues 1–26 (MANIKSAQKRAVQSEKRRQHNASQRS) is disordered.

The protein belongs to the bacterial ribosomal protein bS20 family.

In terms of biological role, binds directly to 16S ribosomal RNA. The protein is Small ribosomal subunit protein bS20 of Glaesserella parasuis serovar 5 (strain SH0165) (Haemophilus parasuis).